The chain runs to 307 residues: Ribonuclease Z (307 aa).

Zn(2+) contacts are provided by His63, His65, Asp67, His68, His141, Asp212, and His270. The active-site Proton acceptor is the Asp67.

It belongs to the RNase Z family. In terms of assembly, homodimer. The cofactor is Zn(2+).

The catalysed reaction is Endonucleolytic cleavage of RNA, removing extra 3' nucleotides from tRNA precursor, generating 3' termini of tRNAs. A 3'-hydroxy group is left at the tRNA terminus and a 5'-phosphoryl group is left at the trailer molecule.. Zinc phosphodiesterase, which displays some tRNA 3'-processing endonuclease activity. Probably involved in tRNA maturation, by removing a 3'-trailer from precursor tRNA. This chain is Ribonuclease Z, found in Bacillus anthracis (strain A0248).